A 183-amino-acid polypeptide reads, in one-letter code: dCTP deaminase, dUMP-forming (183 aa).

Residues 99 to 104 (KSSIAR), Asp-117, 125 to 127 (TLE), Gln-146, Tyr-159, Lys-166, and Gln-170 contribute to the dCTP site. Glu-127 serves as the catalytic Proton donor/acceptor.

It belongs to the dCTP deaminase family. As to quaternary structure, homotrimer.

The enzyme catalyses dCTP + 2 H2O = dUMP + NH4(+) + diphosphate. It participates in pyrimidine metabolism; dUMP biosynthesis; dUMP from dCTP: step 1/1. Functionally, bifunctional enzyme that catalyzes both the deamination of dCTP to dUTP and the hydrolysis of dUTP to dUMP without releasing the toxic dUTP intermediate. This Methanoregula boonei (strain DSM 21154 / JCM 14090 / 6A8) protein is dCTP deaminase, dUMP-forming.